The sequence spans 287 residues: Bifunctional protein FolD (287 aa).

NADP(+) contacts are provided by residues 164 to 166 (GSS), Ser189, and Ile230.

It belongs to the tetrahydrofolate dehydrogenase/cyclohydrolase family. Homodimer.

The enzyme catalyses (6R)-5,10-methylene-5,6,7,8-tetrahydrofolate + NADP(+) = (6R)-5,10-methenyltetrahydrofolate + NADPH. It catalyses the reaction (6R)-5,10-methenyltetrahydrofolate + H2O = (6R)-10-formyltetrahydrofolate + H(+). It functions in the pathway one-carbon metabolism; tetrahydrofolate interconversion. In terms of biological role, catalyzes the oxidation of 5,10-methylenetetrahydrofolate to 5,10-methenyltetrahydrofolate and then the hydrolysis of 5,10-methenyltetrahydrofolate to 10-formyltetrahydrofolate. This Aliarcobacter butzleri (strain RM4018) (Arcobacter butzleri) protein is Bifunctional protein FolD.